A 439-amino-acid chain; its full sequence is GTPase Der (439 aa).

EngA-type G domains are found at residues 2 to 168 (ATVL…EEKG) and 181 to 357 (IKVA…ASYT). GTP contacts are provided by residues 8–15 (GKPNVGKS), 55–59 (DTCGV), 118–121 (NKAE), 187–194 (GRPNVGKS), 234–238 (DTAGL), and 300–303 (NKWD). The 82-residue stretch at 358–439 (TKVPSSAINS…PIFLKFKRSR (82 aa)) folds into the KH-like domain.

This sequence belongs to the TRAFAC class TrmE-Era-EngA-EngB-Septin-like GTPase superfamily. EngA (Der) GTPase family. As to quaternary structure, associates with the 50S ribosomal subunit.

In terms of biological role, GTPase that plays an essential role in the late steps of ribosome biogenesis. The polypeptide is GTPase Der (Thermotoga sp. (strain RQ2)).